We begin with the raw amino-acid sequence, 578 residues long: Telomere repeat-binding protein 1 (578 aa).

The Ubiquitin-like domain maps to 293-372; sequence VKLRIKSFRV…HLDSLDFSLE (80 aa). A disordered region spans residues 440–467; it reads ELSSQSQPPSRKSRRSEQQQQQAAQRRI. Positions 463-522 constitute an HTH myb-type domain; it reads AQRRIRRPFSVAEVEALVQAVEKLGTGRWRDVKLCAFEDADHRTYVDLKDKWKTLVHTAK. Interaction with DNA stretches follow at residues 465–469, 511–515, and 522–529; these read RRIRR, KDKWK, and KISPQQRR. The H-T-H motif DNA-binding region spans 491–518; that stretch reads WRDVKLCAFEDADHRTYVDLKDKWKTLV.

Homodimer and heterodimer with TRP2 and TRP3. Interacts with KU70. As to expression, expressed ubiquitously. Highest expression in flowers and leaves.

The protein resides in the nucleus. In terms of biological role, binds specifically to the plant telomeric double-stranded DNA sequences 5'-GGTTTAG-3'. At least 4 repeats of telomeric sequences are required for binding. Induces DNA bending. In Arabidopsis thaliana (Mouse-ear cress), this protein is Telomere repeat-binding protein 1 (TRP1).